The sequence spans 901 residues: Protein translocase subunit SecA (901 aa).

Residues glutamine 89, 107-111, and aspartate 502 each bind ATP; that span reads GEGKT. Positions 884, 886, 895, and 896 each coordinate Zn(2+).

It belongs to the SecA family. Monomer and homodimer. Part of the essential Sec protein translocation apparatus which comprises SecA, SecYEG and auxiliary proteins SecDF-YajC and YidC. Zn(2+) is required as a cofactor.

The protein resides in the cell inner membrane. Its subcellular location is the cytoplasm. The catalysed reaction is ATP + H2O + cellular proteinSide 1 = ADP + phosphate + cellular proteinSide 2.. Functionally, part of the Sec protein translocase complex. Interacts with the SecYEG preprotein conducting channel. Has a central role in coupling the hydrolysis of ATP to the transfer of proteins into and across the cell membrane, serving both as a receptor for the preprotein-SecB complex and as an ATP-driven molecular motor driving the stepwise translocation of polypeptide chains across the membrane. In Sinorhizobium fredii (strain NBRC 101917 / NGR234), this protein is Protein translocase subunit SecA.